Reading from the N-terminus, the 90-residue chain is MHGPKPTVKDIELDLAPEAVPLVCNEQLDSSDEEDCIDVVEPAQQAYRVVTLCTKCSTTLRLVVESSEADIRAFQELLLRTLKIVCPRCA.

Positions 1–41 are E7 terminal domain; sequence MHGPKPTVKDIELDLAPEAVPLVCNEQLDSSDEEDCIDVVE. An LXCXE motif; interaction with host RB1 and TMEM173/STING motif is present at residues 22 to 26; that stretch reads LVCNE. The segment at 53-89 is a zinc-finger region; the sequence is CTKCSTTLRLVVESSEADIRAFQELLLRTLKIVCPRC. Positions 71 to 79 match the Nuclear export signal motif; it reads IRAFQELLL.

This sequence belongs to the papillomaviridae E7 protein family. Homodimer. Homooligomer. Interacts with host RB1; this interaction induces dissociation of RB1-E2F1 complex thereby disrupting RB1 activity. Interacts with host EP300; this interaction represses EP300 transcriptional activity. Interacts with protein E2; this interaction inhibits E7 oncogenic activity. Interacts with host TMEM173/STING; this interaction impairs the ability of TMEM173/STING to sense cytosolic DNA and promote the production of type I interferon (IFN-alpha and IFN-beta). Highly phosphorylated.

It localises to the host cytoplasm. The protein localises to the host nucleus. Its function is as follows. Plays a role in viral genome replication by driving entry of quiescent cells into the cell cycle. Stimulation of progression from G1 to S phase allows the virus to efficiently use the cellular DNA replicating machinery to achieve viral genome replication. E7 protein has both transforming and trans-activating activities. Induces the disassembly of the E2F1 transcription factor from RB1, with subsequent transcriptional activation of E2F1-regulated S-phase genes. Interferes with host histone deacetylation mediated by HDAC1 and HDAC2, leading to transcription activation. Also plays a role in the inhibition of both antiviral and antiproliferative functions of host interferon alpha. Interaction with host TMEM173/STING impairs the ability of TMEM173/STING to sense cytosolic DNA and promote the production of type I interferon (IFN-alpha and IFN-beta). In Homo sapiens (Human), this protein is Protein E7.